Reading from the N-terminus, the 316-residue chain is MKALWAVLVVTLLAGCLAEGDPELEPEVTDQLGWQTNQPWEQALGRFWDYLRWVQTLSDQVQQELQTSQVTQELTVLMEDTMTELKAYKKELEEQMGPMAEETRARLAKEVQAAQSRLGADMEDLRNRLGLYRNEVQTMLGQSTEELRARLTTHLRKLRKRLMRDAEDLQKRLAVYKAGAREGAERGVGAIRERLGPLVEQGRQRTANLGAGAAQPLRERAQALGARIRGRLEEVGNQARDRLEEVREQMEEVRAKVEEQAQQMRLQAEIFQTRLKGWFEPLVEDMQRQWANLMEKIQASVATNPIPPSSVPQESQ.

The N-terminal stretch at methionine 1–alanine 18 is a signal peptide. 8 tandem repeats follow at residues valine 76 to glycine 97, proline 98 to glycine 119, alanine 120 to glycine 141, glutamine 142 to methionine 163, arginine 164 to glutamate 185, arginine 186 to alanine 207, asparagine 208 to arginine 229, and glycine 230 to glutamate 251. Positions valine 76 to glutamate 251 are 8 X 22 AA approximate tandem repeats. Methionine 139 carries the methionine sulfoxide modification. Serine 143 bears the Phosphoserine mark. The segment at histidine 154–arginine 164 is LDL and other lipoprotein receptors binding. Leucine 158–arginine 161 is a heparin binding site. A lipid-binding and lipoprotein association region spans residues threonine 206–methionine 286. A heparin-binding site is contributed by glycine 225–leucine 232. Residues glutamine 262–glutamine 316 are homooligomerization. Positions arginine 274–methionine 286 are specificity for association with VLDL.

This sequence belongs to the apolipoprotein A1/A4/E family. In terms of assembly, homotetramer. May interact with ABCA1; functionally associated with ABCA1 in the biogenesis of HDLs. May interact with APP/A4 amyloid-beta peptide; the interaction is extremely stable in vitro but its physiological significance is unclear. May interact with MAPT. May interact with MAP2. In the cerebrospinal fluid, interacts with secreted SORL1. Interacts with PMEL; this allows the loading of PMEL luminal fragment on ILVs to induce fibril nucleation. In terms of processing, APOE exists as multiple glycosylated and sialylated glycoforms within cells and in plasma. The extent of glycosylation and sialylation are tissue and context specific. Glycated in plasma VLDL. Post-translationally, phosphorylated by FAM20C in the extracellular medium.

Its subcellular location is the secreted. It is found in the extracellular space. The protein localises to the extracellular matrix. The protein resides in the extracellular vesicle. It localises to the endosome. Its subcellular location is the multivesicular body. Its function is as follows. APOE is an apolipoprotein, a protein associating with lipid particles, that mainly functions in lipoprotein-mediated lipid transport between organs via the plasma and interstitial fluids. APOE is a core component of plasma lipoproteins and is involved in their production, conversion and clearance. Apolipoproteins are amphipathic molecules that interact both with lipids of the lipoprotein particle core and the aqueous environment of the plasma. As such, APOE associates with chylomicrons, chylomicron remnants, very low density lipoproteins (VLDL) and intermediate density lipoproteins (IDL) but shows a preferential binding to high-density lipoproteins (HDL). It also binds a wide range of cellular receptors including the LDL receptor/LDLR, the LDL receptor-related proteins LRP1, LRP2 and LRP8 and the very low-density lipoprotein receptor/VLDLR that mediate the cellular uptake of the APOE-containing lipoprotein particles. Finally, APOE also has a heparin-binding activity and binds heparan-sulfate proteoglycans on the surface of cells, a property that supports the capture and the receptor-mediated uptake of APOE-containing lipoproteins by cells. A main function of APOE is to mediate lipoprotein clearance through the uptake of chylomicrons, VLDLs, and HDLs by hepatocytes. APOE is also involved in the biosynthesis by the liver of VLDLs as well as their uptake by peripheral tissues ensuring the delivery of triglycerides and energy storage in muscle, heart and adipose tissues. By participating in the lipoprotein-mediated distribution of lipids among tissues, APOE plays a critical role in plasma and tissues lipid homeostasis. APOE is also involved in two steps of reverse cholesterol transport, the HDLs-mediated transport of cholesterol from peripheral tissues to the liver, and thereby plays an important role in cholesterol homeostasis. First, it is functionally associated with ABCA1 in the biogenesis of HDLs in tissues. Second, it is enriched in circulating HDLs and mediates their uptake by hepatocytes. APOE also plays an important role in lipid transport in the central nervous system, regulating neuron survival and sprouting. The polypeptide is Apolipoprotein E (APOE) (Microtus ochrogaster (Prairie vole)).